The following is a 252-amino-acid chain: tRNA-cytidine(32) 2-sulfurtransferase (252 aa).

The short motif at 37 to 42 (SGGKDS) is the PP-loop motif element. Residues Cys112, Cys115, and Cys202 each contribute to the [4Fe-4S] cluster site.

The protein belongs to the TtcA family. In terms of assembly, homodimer. Mg(2+) is required as a cofactor. It depends on [4Fe-4S] cluster as a cofactor.

Its subcellular location is the cytoplasm. It catalyses the reaction cytidine(32) in tRNA + S-sulfanyl-L-cysteinyl-[cysteine desulfurase] + AH2 + ATP = 2-thiocytidine(32) in tRNA + L-cysteinyl-[cysteine desulfurase] + A + AMP + diphosphate + H(+). The protein operates within tRNA modification. Functionally, catalyzes the ATP-dependent 2-thiolation of cytidine in position 32 of tRNA, to form 2-thiocytidine (s(2)C32). The sulfur atoms are provided by the cysteine/cysteine desulfurase (IscS) system. The sequence is that of tRNA-cytidine(32) 2-sulfurtransferase from Geotalea daltonii (strain DSM 22248 / JCM 15807 / FRC-32) (Geobacter daltonii).